A 105-amino-acid chain; its full sequence is Small ribosomal subunit protein bS18 (105 aa).

The segment at 1 to 34 (MMINKEQDLNQLETNQEQSVEQNQTDEKRKPKPN) is disordered. A compositionally biased stretch (polar residues) spans 9 to 23 (LNQLETNQEQSVEQN).

It belongs to the bacterial ribosomal protein bS18 family. Part of the 30S ribosomal subunit. Forms a tight heterodimer with protein bS6.

Functionally, binds as a heterodimer with protein bS6 to the central domain of the 16S rRNA, where it helps stabilize the platform of the 30S subunit. The protein is Small ribosomal subunit protein bS18 of Mycoplasma genitalium (strain ATCC 33530 / DSM 19775 / NCTC 10195 / G37) (Mycoplasmoides genitalium).